A 385-amino-acid polypeptide reads, in one-letter code: Cytochrome b (385 aa).

Helical transmembrane passes span 32–52 (FGSL…TLAM), 76–98 (WLVR…LHIG), 113–133 (TWAI…LGYV), and 179–199 (FFAL…MHLI). Residues histidine 82 and histidine 96 each coordinate heme b. The heme b site is built by histidine 183 and histidine 197. Histidine 202 contributes to the a ubiquinone binding site. Helical transmembrane passes span 226 to 246 (FIFK…IFVF), 290 to 310 (LLGV…PITD), 322 to 342 (LSKV…QIGA), and 349 to 369 (FIEL…VIVP).

The protein belongs to the cytochrome b family. As to quaternary structure, fungal cytochrome b-c1 complex contains 10 subunits; 3 respiratory subunits, 2 core proteins and 5 low-molecular weight proteins. Cytochrome b-c1 complex is a homodimer. It depends on heme b as a cofactor.

Its subcellular location is the mitochondrion inner membrane. Its function is as follows. Component of the ubiquinol-cytochrome c reductase complex (complex III or cytochrome b-c1 complex) that is part of the mitochondrial respiratory chain. The b-c1 complex mediates electron transfer from ubiquinol to cytochrome c. Contributes to the generation of a proton gradient across the mitochondrial membrane that is then used for ATP synthesis. This is Cytochrome b (cob) from Aspergillus tubingensis.